Consider the following 476-residue polypeptide: UDP-N-acetylmuramate--L-alanine ligase (476 aa).

Residue 112 to 118 (GTHGKTT) coordinates ATP.

Belongs to the MurCDEF family.

Its subcellular location is the cytoplasm. The enzyme catalyses UDP-N-acetyl-alpha-D-muramate + L-alanine + ATP = UDP-N-acetyl-alpha-D-muramoyl-L-alanine + ADP + phosphate + H(+). Its pathway is cell wall biogenesis; peptidoglycan biosynthesis. In terms of biological role, cell wall formation. The polypeptide is UDP-N-acetylmuramate--L-alanine ligase (Magnetococcus marinus (strain ATCC BAA-1437 / JCM 17883 / MC-1)).